A 427-amino-acid polypeptide reads, in one-letter code: Serine--tRNA ligase (427 aa).

An L-serine-binding site is contributed by 231–233; that stretch reads TAE. 262 to 264 serves as a coordination point for ATP; the sequence is RSE. Residue Glu-285 participates in L-serine binding. Residue 349 to 352 participates in ATP binding; it reads EISS. Ser-385 serves as a coordination point for L-serine.

This sequence belongs to the class-II aminoacyl-tRNA synthetase family. Type-1 seryl-tRNA synthetase subfamily. In terms of assembly, homodimer. The tRNA molecule binds across the dimer.

Its subcellular location is the cytoplasm. The enzyme catalyses tRNA(Ser) + L-serine + ATP = L-seryl-tRNA(Ser) + AMP + diphosphate + H(+). The catalysed reaction is tRNA(Sec) + L-serine + ATP = L-seryl-tRNA(Sec) + AMP + diphosphate + H(+). The protein operates within aminoacyl-tRNA biosynthesis; selenocysteinyl-tRNA(Sec) biosynthesis; L-seryl-tRNA(Sec) from L-serine and tRNA(Sec): step 1/1. In terms of biological role, catalyzes the attachment of serine to tRNA(Ser). Is also able to aminoacylate tRNA(Sec) with serine, to form the misacylated tRNA L-seryl-tRNA(Sec), which will be further converted into selenocysteinyl-tRNA(Sec). The polypeptide is Serine--tRNA ligase (Staphylococcus saprophyticus subsp. saprophyticus (strain ATCC 15305 / DSM 20229 / NCIMB 8711 / NCTC 7292 / S-41)).